The sequence spans 283 residues: Protein/nucleic acid deglycase HchA (283 aa).

Positions 86, 91, and 123 each coordinate Zn(2+). The active-site Nucleophile is Cys-185.

The protein belongs to the peptidase C56 family. HchA subfamily. Homodimer.

It localises to the cytoplasm. It carries out the reaction N(omega)-(1-hydroxy-2-oxopropyl)-L-arginyl-[protein] + H2O = lactate + L-arginyl-[protein] + H(+). The catalysed reaction is N(6)-(1-hydroxy-2-oxopropyl)-L-lysyl-[protein] + H2O = lactate + L-lysyl-[protein] + H(+). The enzyme catalyses S-(1-hydroxy-2-oxopropyl)-L-cysteinyl-[protein] + H2O = lactate + L-cysteinyl-[protein] + H(+). It catalyses the reaction N(omega)-(1-hydroxy-2-oxoethyl)-L-arginyl-[protein] + H2O = L-arginyl-[protein] + glycolate + H(+). It carries out the reaction N(6)-(1-hydroxy-2-oxoethyl)-L-lysyl-[protein] + H2O = glycolate + L-lysyl-[protein] + H(+). The catalysed reaction is S-(1-hydroxy-2-oxoethyl)-L-cysteinyl-[protein] + H2O = glycolate + L-cysteinyl-[protein] + H(+). The enzyme catalyses N(2)-(1-hydroxy-2-oxopropyl)-dGTP + H2O = lactate + dGTP + H(+). It catalyses the reaction N(2)-(1-hydroxy-2-oxopropyl)-GTP + H2O = lactate + GTP + H(+). It carries out the reaction N(2)-(1-hydroxy-2-oxopropyl)-GDP + H2O = lactate + GDP + H(+). The catalysed reaction is N(2)-(1-hydroxy-2-oxopropyl)-GMP + H2O = lactate + GMP + H(+). The enzyme catalyses N(2)-(1-hydroxy-2-oxoethyl)-dGTP + H2O = dGTP + glycolate + H(+). It catalyses the reaction N(2)-(1-hydroxy-2-oxoethyl)-GTP + H2O = glycolate + GTP + H(+). It carries out the reaction N(2)-(1-hydroxy-2-oxoethyl)-GDP + H2O = glycolate + GDP + H(+). The catalysed reaction is N(2)-(1-hydroxy-2-oxoethyl)-GMP + H2O = glycolate + GMP + H(+). The enzyme catalyses an N(2)-(1-hydroxy-2-oxopropyl)-guanosine in RNA + H2O = a guanosine in RNA + lactate + H(+). It catalyses the reaction an N(2)-(1-hydroxy-2-oxopropyl)-2'-deoxyguanosine in DNA + H2O = a 2'-deoxyguanosine in DNA + lactate + H(+). It carries out the reaction an N(2)-(1-hydroxy-2-oxoethyl)-guanosine in RNA + H2O = a guanosine in RNA + glycolate + H(+). The catalysed reaction is an N(2)-(1-hydroxy-2-oxoethyl)-2'-deoxyguanosine in DNA + H2O = a 2'-deoxyguanosine in DNA + glycolate + H(+). Its function is as follows. Protein and nucleotide deglycase that catalyzes the deglycation of the Maillard adducts formed between amino groups of proteins or nucleotides and reactive carbonyl groups of glyoxals. Thus, functions as a protein deglycase that repairs methylglyoxal- and glyoxal-glycated proteins, and releases repaired proteins and lactate or glycolate, respectively. Deglycates cysteine, arginine and lysine residues in proteins, and thus reactivates these proteins by reversing glycation by glyoxals. Acts on early glycation intermediates (hemithioacetals and aminocarbinols), preventing the formation of Schiff bases and advanced glycation endproducts (AGE). Also functions as a nucleotide deglycase able to repair glycated guanine in the free nucleotide pool (GTP, GDP, GMP, dGTP) and in DNA and RNA. Is thus involved in a major nucleotide repair system named guanine glycation repair (GG repair), dedicated to reversing methylglyoxal and glyoxal damage via nucleotide sanitization and direct nucleic acid repair. Plays an important role in protecting cells from carbonyl stress. The sequence is that of Protein/nucleic acid deglycase HchA from Escherichia coli O81 (strain ED1a).